Here is a 437-residue protein sequence, read N- to C-terminus: Transcription factor AP-2-alpha (437 aa).

A Glycyl lysine isopeptide (Lys-Gly) (interchain with G-Cter in SUMO); alternate cross-link involves residue Lys-10. Lys-10 participates in a covalent cross-link: Glycyl lysine isopeptide (Lys-Gly) (interchain with G-Cter in SUMO2); alternate. Positions 14–107 (CEDRHDGTSN…GQRQSQESGL (94 aa)) are disordered. Positions 57–62 (YFPPPY) match the PPxY motif motif. Composition is skewed to low complexity over residues 65–74 (IYPQSQDPYS) and 88–101 (QPQP…GQRQ). Residues Lys-177 and Lys-184 each participate in a glycyl lysine isopeptide (Lys-Gly) (interchain with G-Cter in SUMO2) cross-link. The residue at position 239 (Ser-239) is a Phosphoserine; by PKA. The tract at residues 280 to 410 (RRKAANVTLL…YLTEALKAMD (131 aa)) is H-S-H (helix-span-helix), dimerization. The span at 414-427 (LSNNPNSHTDNNAK) shows a compositional bias: polar residues. The segment at 414–437 (LSNNPNSHTDNNAKSSDKEEKHRK) is disordered. A compositionally biased stretch (basic and acidic residues) spans 428–437 (SSDKEEKHRK).

This sequence belongs to the AP-2 family. Binds DNA as a dimer. Can form homodimers or heterodimers with other AP-2 family members. Interacts with WWOX. Interacts with CITED4. Interacts with UBE2I. Interacts with RALBP1 in a complex also containing EPN1 and NUMB during interphase and mitosis. Interacts with KCTD1; this interaction represses transcription activation. Interacts (via C-terminus) with CITED2 (via C-terminus); the interaction stimulates TFAP2A-transcriptional activation. Interacts (via N-terminus) with EP300 (via N-terminus); the interaction requires CITED2. Interacts with KCTD15; this interaction inhibits TFAP2A transcriptional activation. Post-translationally, sumoylated on Lys-10; which inhibits transcriptional activity.

Its subcellular location is the nucleus. In terms of biological role, sequence-specific DNA-binding protein that interacts with inducible viral and cellular enhancer elements to regulate transcription of selected genes. AP-2 factors bind to the consensus sequence 5'-GCCNNNGGC-3' and activate genes involved in a large spectrum of important biological functions including proper eye, face, body wall, limb and neural tube development. They also suppress a number of genes including MCAM/MUC18, C/EBP alpha and MYC. AP-2-alpha is the only AP-2 protein required for early morphogenesis of the lens vesicle. Together with the CITED2 coactivator, stimulates the PITX2 P1 promoter transcription activation. Associates with chromatin to the PITX2 P1 promoter region. The sequence is that of Transcription factor AP-2-alpha (TFAP2A) from Homo sapiens (Human).